The sequence spans 164 residues: Diphosphoinositol polyphosphate phosphohydrolase 3-beta (164 aa).

Substrate contacts are provided by residues Arg-9, 17–19 (KKR), and 38–40 (SSR). A Nudix hydrolase domain is found at 17–144 (KKRAACLCFR…VHAEYLQKLK (128 aa)). Gly-49 and Glu-65 together coordinate Mg(2+). Residues 50 to 71 (GGMEPEEEPGGAAVREVFEEAG) carry the Nudix box motif. Residue Glu-68 is the Proton acceptor of the active site. Glu-69 contributes to the Mg(2+) binding site. Substrate is bound by residues 89–91 (RKH), Arg-115, and Lys-133. Residues 144–164 (KLGGSPTNGNSVAPSPPEGDP) are disordered.

The protein belongs to the Nudix hydrolase family. DIPP subfamily. Requires Mg(2+) as cofactor. Mn(2+) is required as a cofactor.

It localises to the cytoplasm. The enzyme catalyses diphospho-myo-inositol polyphosphate + H2O = myo-inositol polyphosphate + phosphate.. The catalysed reaction is P(1),P(6)-bis(5'-adenosyl) hexaphosphate + H2O = adenosine 5'-pentaphosphate + AMP + 2 H(+). It catalyses the reaction P(1),P(5)-bis(5'-adenosyl) pentaphosphate + H2O = adenosine 5'-tetraphosphate + AMP + 2 H(+). Its function is as follows. Cleaves a beta-phosphate from the diphosphate groups in PP-InsP5 (diphosphoinositol pentakisphosphate), suggesting that it may play a role in signal transduction. Also able to catalyze the hydrolysis of dinucleoside oligophosphates, with Ap6A and Ap5A being the preferred substrates. The major reaction products are ADP and p4a from Ap6A and ADP and ATP from Ap5A. Also able to hydrolyze 5-phosphoribose 1-diphosphate. The chain is Diphosphoinositol polyphosphate phosphohydrolase 3-beta from Bos taurus (Bovine).